The following is a 53-amino-acid chain: UPF0391 membrane protein PputGB1_0151 (53 aa).

A run of 2 helical transmembrane segments spans residues 4–24 (WAIT…GGIA) and 29–49 (GIAK…FFFG).

It belongs to the UPF0391 family.

It is found in the cell membrane. This chain is UPF0391 membrane protein PputGB1_0151, found in Pseudomonas putida (strain GB-1).